The following is a 261-amino-acid chain: Epidermal growth factor-binding protein type B (261 aa).

The N-terminal stretch at 1–16 (MWFLILFLALSLGGID) is a signal peptide. A propeptide spans 17 to 24 (AAPPLQSR) (activation peptide). Residues 25–258 (VVGGFNCKKN…FNSWIKDTMM (234 aa)) enclose the Peptidase S1 domain. 5 disulfide bridges follow: C31–C173, C50–C66, C152–C219, C184–C198, and C209–C234. Catalysis depends on H65, which acts as the Charge relay system. The N-linked (GlcNAc...) asparagine glycan is linked to N102. D120 (charge relay system) is an active-site residue. S213 acts as the Charge relay system in catalysis.

It belongs to the peptidase S1 family. Kallikrein subfamily.

The catalysed reaction is Hydrolyzes mouse Ren2 protein (a species of prorenin present in the submandibular gland) on the carboxy side of the arginine residue at the Lys-Arg-|- pair in the N-terminus, to yield mature renin.. In terms of biological role, cleaves REN2 at a dibasic site to yield mature renin. The polypeptide is Epidermal growth factor-binding protein type B (Egfbp2) (Mus musculus (Mouse)).